The following is a 394-amino-acid chain: p-hydroxybenzoate hydroxylase (394 aa).

FAD is bound by residues Ser-13, Glu-32, 42-47 (RIRAGV), and Gln-102. Residues Tyr-201, 212–214 (SQR), and Tyr-222 each bind substrate. Asp-286 lines the FAD pocket. Pro-293 contributes to the substrate binding site. 299 to 300 (LN) lines the FAD pocket.

Belongs to the aromatic-ring hydroxylase family. Homodimer. It depends on FAD as a cofactor.

The catalysed reaction is 4-hydroxybenzoate + NADPH + O2 + H(+) = 3,4-dihydroxybenzoate + NADP(+) + H2O. It participates in aromatic compound metabolism; benzoate degradation via hydroxylation; 3,4-dihydroxybenzoate from benzoate: step 2/2. Catalyzes the incorporation of an atom of dioxygen into p-hydroxybenzoate (p-OHB) to form 3,4-dihydroxybenzoate (3,4DOHB). The reaction occurs in two parts: reduction of the flavin adenine dinucleotide (FAD) in the enzyme by reduced nicotinamide adenine dinucleotide phosphate (NADPH) in response to binding p-hydroxybenzoate to the enzyme and oxidation of reduced FAD with oxygen to form a hydroperoxide, which then oxygenates p-hydroxybenzoate. The polypeptide is p-hydroxybenzoate hydroxylase (Pseudomonas aeruginosa (strain ATCC 15692 / DSM 22644 / CIP 104116 / JCM 14847 / LMG 12228 / 1C / PRS 101 / PAO1)).